Here is a 460-residue protein sequence, read N- to C-terminus: Kynurenine 3-monooxygenase (460 aa).

FAD is bound by residues valine 13, 32-34 (DFR), and alanine 53. L-kynurenine-binding residues include arginine 83 and tyrosine 97. Residues arginine 109, leucine 133, tyrosine 195, aspartate 314, and 325 to 328 (QGMN) contribute to the FAD site. Residues asparagine 373 and tyrosine 408 each coordinate L-kynurenine.

It belongs to the aromatic-ring hydroxylase family. KMO subfamily. FAD is required as a cofactor.

Its subcellular location is the mitochondrion outer membrane. The enzyme catalyses L-kynurenine + NADPH + O2 + H(+) = 3-hydroxy-L-kynurenine + NADP(+) + H2O. The protein operates within cofactor biosynthesis; NAD(+) biosynthesis; quinolinate from L-kynurenine: step 1/3. Catalyzes the hydroxylation of L-kynurenine (L-Kyn) to form 3-hydroxy-L-kynurenine (L-3OHKyn). Required for synthesis of quinolinic acid. The sequence is that of Kynurenine 3-monooxygenase from Saccharomyces cerevisiae (strain ATCC 204508 / S288c) (Baker's yeast).